The chain runs to 93 residues: Large ribosomal subunit protein uL23 (93 aa).

This sequence belongs to the universal ribosomal protein uL23 family. In terms of assembly, part of the 50S ribosomal subunit. Contacts protein L29, and trigger factor when it is bound to the ribosome.

Functionally, one of the early assembly proteins it binds 23S rRNA. One of the proteins that surrounds the polypeptide exit tunnel on the outside of the ribosome. Forms the main docking site for trigger factor binding to the ribosome. This chain is Large ribosomal subunit protein uL23, found in Campylobacter fetus subsp. fetus (strain 82-40).